Consider the following 170-residue polypeptide: 3-hydroxydecanoyl-[acyl-carrier-protein] dehydratase (170 aa).

His-69 is an active-site residue.

Belongs to the thioester dehydratase family. FabA subfamily. In terms of assembly, homodimer.

Its subcellular location is the cytoplasm. It carries out the reaction a (3R)-hydroxyacyl-[ACP] = a (2E)-enoyl-[ACP] + H2O. It catalyses the reaction (3R)-hydroxydecanoyl-[ACP] = (2E)-decenoyl-[ACP] + H2O. The enzyme catalyses (2E)-decenoyl-[ACP] = (3Z)-decenoyl-[ACP]. It participates in lipid metabolism; fatty acid biosynthesis. Its function is as follows. Necessary for the introduction of cis unsaturation into fatty acids. Catalyzes the dehydration of (3R)-3-hydroxydecanoyl-ACP to E-(2)-decenoyl-ACP and then its isomerization to Z-(3)-decenoyl-ACP. Can catalyze the dehydratase reaction for beta-hydroxyacyl-ACPs with saturated chain lengths up to 16:0, being most active on intermediate chain length. In Idiomarina loihiensis (strain ATCC BAA-735 / DSM 15497 / L2-TR), this protein is 3-hydroxydecanoyl-[acyl-carrier-protein] dehydratase.